A 217-amino-acid polypeptide reads, in one-letter code: Large ribosomal subunit protein uL3 (217 aa).

Polar residues predominate over residues 134 to 146; that stretch reads GRATHGNSRSHNV. A disordered region spans residues 134–154; sequence GRATHGNSRSHNVPGSIGMAQ. The residue at position 154 (Q154) is an N5-methylglutamine.

Belongs to the universal ribosomal protein uL3 family. As to quaternary structure, part of the 50S ribosomal subunit. Forms a cluster with proteins L14 and L19. Methylated by PrmB.

Functionally, one of the primary rRNA binding proteins, it binds directly near the 3'-end of the 23S rRNA, where it nucleates assembly of the 50S subunit. The protein is Large ribosomal subunit protein uL3 of Burkholderia cenocepacia (strain HI2424).